Consider the following 598-residue polypeptide: MLEQASNLHLFADVLARVHAICAALAKDGNWPEGIDVSRVVVEPPRDPSHGDMATNAAMVLAKEAKAKPRDLAEAIAERLRADELVAKVDVAGPGFINLTLHPVVWARQLGTILRDGDAYGRIAPVVGAPKVNVEYVSANPTGPMHVGHCRGAVFGDALCSLLQFAGRDVTREYYINDAGAQVDVLARSAFLRYREALGEEIGAIPEGLYPGDYLKPVGQALAAEHGDRLKAMPEAQWLPIVRDKAIAMMMAEIKDDLAALNIRHDVFFSERSLIAGSTNKVAETIEFLRERGDVYEGRLPPPKGAPVEDWEDREQLLFRATAYGDDVDRPLIKSDGSYTYFASDIANHRHKFERGFADLIDVFGADHGGYIKRMQAAVKAVTAAQAVLDVKVVQLVKLLRNGEPVKMSKRSGDFVTLREVVDEVGRDAVRFMMLYRKNDAVLDFDLAKVIEQSRDNPVFYVQYGHARGHSIFRNARDSFPSLPVEEGARLAFLRQAKLEKLADPSEIDLLKRLALYPRTVESAALAHEPHRVAFYLYDLASEFHALWTRGRDLPYLRFIIDDDAELTMARLAMVQGVVSVLASGLAILGVNAPDAMR.

Residues 139–149 (ANPTGPMHVGH) carry the 'HIGH' region motif.

It belongs to the class-I aminoacyl-tRNA synthetase family. As to quaternary structure, monomer.

It localises to the cytoplasm. It catalyses the reaction tRNA(Arg) + L-arginine + ATP = L-arginyl-tRNA(Arg) + AMP + diphosphate. The polypeptide is Arginine--tRNA ligase (Bradyrhizobium sp. (strain BTAi1 / ATCC BAA-1182)).